The primary structure comprises 487 residues: Protein nucleotidyltransferase YdiU (487 aa).

Gly-90, Gly-92, Arg-93, Lys-113, Asp-125, Gly-126, Arg-176, and Arg-183 together coordinate ATP. The Proton acceptor role is filled by Asp-252. Mg(2+) is bound by residues Asn-253 and Asp-262. Asp-262 is a binding site for ATP.

Belongs to the SELO family. It depends on Mg(2+) as a cofactor. Mn(2+) is required as a cofactor.

It catalyses the reaction L-seryl-[protein] + ATP = 3-O-(5'-adenylyl)-L-seryl-[protein] + diphosphate. The enzyme catalyses L-threonyl-[protein] + ATP = 3-O-(5'-adenylyl)-L-threonyl-[protein] + diphosphate. The catalysed reaction is L-tyrosyl-[protein] + ATP = O-(5'-adenylyl)-L-tyrosyl-[protein] + diphosphate. It carries out the reaction L-histidyl-[protein] + UTP = N(tele)-(5'-uridylyl)-L-histidyl-[protein] + diphosphate. It catalyses the reaction L-seryl-[protein] + UTP = O-(5'-uridylyl)-L-seryl-[protein] + diphosphate. The enzyme catalyses L-tyrosyl-[protein] + UTP = O-(5'-uridylyl)-L-tyrosyl-[protein] + diphosphate. In terms of biological role, nucleotidyltransferase involved in the post-translational modification of proteins. It can catalyze the addition of adenosine monophosphate (AMP) or uridine monophosphate (UMP) to a protein, resulting in modifications known as AMPylation and UMPylation. The sequence is that of Protein nucleotidyltransferase YdiU from Pseudomonas syringae pv. syringae (strain B728a).